We begin with the raw amino-acid sequence, 185 residues long: Ribosome-recycling factor (185 aa).

This sequence belongs to the RRF family.

The protein localises to the cytoplasm. In terms of biological role, responsible for the release of ribosomes from messenger RNA at the termination of protein biosynthesis. May increase the efficiency of translation by recycling ribosomes from one round of translation to another. The chain is Ribosome-recycling factor from Legionella pneumophila (strain Paris).